The sequence spans 320 residues: Aspartate carbamoyltransferase catalytic subunit (320 aa).

Positions 68 and 69 each coordinate carbamoyl phosphate. An L-aspartate-binding site is contributed by Lys96. Carbamoyl phosphate-binding residues include Arg118, His148, and Gln151. Arg181 and Arg236 together coordinate L-aspartate. Carbamoyl phosphate contacts are provided by Gly277 and Pro278.

It belongs to the aspartate/ornithine carbamoyltransferase superfamily. ATCase family. In terms of assembly, heterododecamer (2C3:3R2) of six catalytic PyrB chains organized as two trimers (C3), and six regulatory PyrI chains organized as three dimers (R2).

The enzyme catalyses carbamoyl phosphate + L-aspartate = N-carbamoyl-L-aspartate + phosphate + H(+). It functions in the pathway pyrimidine metabolism; UMP biosynthesis via de novo pathway; (S)-dihydroorotate from bicarbonate: step 2/3. Functionally, catalyzes the condensation of carbamoyl phosphate and aspartate to form carbamoyl aspartate and inorganic phosphate, the committed step in the de novo pyrimidine nucleotide biosynthesis pathway. This chain is Aspartate carbamoyltransferase catalytic subunit, found in Variovorax paradoxus (strain S110).